The following is a 154-amino-acid chain: 6,7-dimethyl-8-ribityllumazine synthase (154 aa).

Residues phenylalanine 26, alanine 60–glutamate 62, and cysteine 84–isoleucine 86 contribute to the 5-amino-6-(D-ribitylamino)uracil site. Residue glutamate 89–threonine 90 coordinates (2S)-2-hydroxy-3-oxobutyl phosphate. Histidine 92 acts as the Proton donor in catalysis. Asparagine 117 lines the 5-amino-6-(D-ribitylamino)uracil pocket. A (2S)-2-hydroxy-3-oxobutyl phosphate-binding site is contributed by arginine 131.

This sequence belongs to the DMRL synthase family.

The enzyme catalyses (2S)-2-hydroxy-3-oxobutyl phosphate + 5-amino-6-(D-ribitylamino)uracil = 6,7-dimethyl-8-(1-D-ribityl)lumazine + phosphate + 2 H2O + H(+). The protein operates within cofactor biosynthesis; riboflavin biosynthesis; riboflavin from 2-hydroxy-3-oxobutyl phosphate and 5-amino-6-(D-ribitylamino)uracil: step 1/2. Its function is as follows. Catalyzes the formation of 6,7-dimethyl-8-ribityllumazine by condensation of 5-amino-6-(D-ribitylamino)uracil with 3,4-dihydroxy-2-butanone 4-phosphate. This is the penultimate step in the biosynthesis of riboflavin. The sequence is that of 6,7-dimethyl-8-ribityllumazine synthase from Paracidovorax citrulli (strain AAC00-1) (Acidovorax citrulli).